The sequence spans 289 residues: MEGKEEDVRLGANRYSERQPIGTAAQGAGDDKDYKEPPPAPLFEPGELKSWSFYRAGIAEFVATFLFLYITILTVMGVSKSSSKCATVGIQGIAWSFGGMIFALVYCTAGISGGHINPAVTFGLFLARKLSLTRAIFYIVMQCLGAICGAGVVKGFQQGLYMGNGGGANVVASGYTKGDGLGAEIVGTFILVYTVFSATDAKRNARDSHVPILAPLPIGFAVFLVHLATIPITGTGINPARSLGAAIIYNKDHAWNDHWIFWVGPFVGAALAAIYHQVIIRAIPFKSRS.

The tract at residues 1 to 36 (MEGKEEDVRLGANRYSERQPIGTAAQGAGDDKDYKE) is disordered. Transmembrane regions (helical) follow at residues 58–78 (IAEFVATFLFLYITILTVMGV) and 93–115 (IAWSFGGMIFALVYCTAGISGGH). Residues 117-119 (NPA) carry the NPA 1 motif. The next 3 membrane-spanning stretches (helical) occupy residues 136 to 156 (IFYIVMQCLGAICGAGVVKGF), 178 to 198 (GDGLGAEIVGTFILVYTVFSA), and 212 to 232 (ILAPLPIGFAVFLVHLATIPI). The NPA 2 signature appears at 238-240 (NPA). A helical transmembrane segment spans residues 260–280 (IFWVGPFVGAALAAIYHQVII).

It belongs to the MIP/aquaporin (TC 1.A.8) family. PIP (TC 1.A.8.11) subfamily. In terms of tissue distribution, expressed in roots, leaves and anthers.

The protein resides in the cell membrane. In terms of biological role, may function as water channel to facilitate the transport of water across cell membrane. This chain is Aquaporin PIP1-1 (PIP1-1), found in Oryza sativa subsp. japonica (Rice).